We begin with the raw amino-acid sequence, 210 residues long: 3-hexulose-6-phosphate synthase (210 aa).

Belongs to the HPS/KGPDC family. HPS subfamily.

It carries out the reaction D-ribulose 5-phosphate + formaldehyde = D-arabino-hex-3-ulose 6-phosphate. Its pathway is one-carbon metabolism; formaldehyde assimilation via RuMP pathway; D-fructose 6-phosphate from D-ribulose 5-phosphate and formaldehyde: step 1/2. Its function is as follows. Catalyzes the condensation of ribulose 5-phosphate with formaldehyde to form 3-hexulose 6-phosphate. Together with HxlB, may act as a formaldehyde detoxification system. The chain is 3-hexulose-6-phosphate synthase (hxlA) from Bacillus subtilis (strain 168).